Here is a 212-residue protein sequence, read N- to C-terminus: Thymidylate kinase (212 aa).

11 to 18 (GPEGAGKT) lines the ATP pocket.

The protein belongs to the thymidylate kinase family.

It carries out the reaction dTMP + ATP = dTDP + ADP. In terms of biological role, phosphorylation of dTMP to form dTDP in both de novo and salvage pathways of dTTP synthesis. This Streptococcus pneumoniae (strain Taiwan19F-14) protein is Thymidylate kinase.